A 149-amino-acid chain; its full sequence is MEVILLEKVGKLGTVGDKVKVKAGFGRNYLVPQGKAIAATESNIAEFEARRAELEAAASDRRTAAEGRAKLLAEKETFTIVAKTGDEGKLFGSVGTRDIADAITADGIKVSKAEVKLPQGTLREVGEYEVDIQLHVDVTQAIKLVIAAE.

It belongs to the bacterial ribosomal protein bL9 family.

In terms of biological role, binds to the 23S rRNA. This is Large ribosomal subunit protein bL9 from Teredinibacter turnerae (strain ATCC 39867 / T7901).